A 210-amino-acid polypeptide reads, in one-letter code: Imidazoleglycerol-phosphate dehydratase (210 aa).

A disordered region spans residues 1 to 23 (MNDSLLSNGHAPPLRQATVDRQT).

This sequence belongs to the imidazoleglycerol-phosphate dehydratase family.

Its subcellular location is the cytoplasm. The catalysed reaction is D-erythro-1-(imidazol-4-yl)glycerol 3-phosphate = 3-(imidazol-4-yl)-2-oxopropyl phosphate + H2O. It participates in amino-acid biosynthesis; L-histidine biosynthesis; L-histidine from 5-phospho-alpha-D-ribose 1-diphosphate: step 6/9. The chain is Imidazoleglycerol-phosphate dehydratase from Thermosynechococcus vestitus (strain NIES-2133 / IAM M-273 / BP-1).